The primary structure comprises 175 residues: Alpha-crystallin B chain (175 aa).

An N-acetylmethionine modification is found at Met1. The residue at position 19 (Ser19) is a Phosphoserine. The O-linked (GlcNAc) serine glycan is linked to Ser41. Phosphoserine occurs at positions 45 and 59. A sHSP domain is found at 56–164 (RAPSWFDTGL…PERTIPITRE (109 aa)). His83 contributes to the Zn(2+) binding site. At Lys92 the chain carries N6-acetyllysine. Residues His104, Glu106, His111, and His119 each coordinate Zn(2+). A disordered region spans residues 142–175 (VLTVNGPRKQVSGPERTIPITREEKPAVTAAPKK). N6-acetyllysine is present on Lys166. Residue Thr170 is glycosylated (O-linked (GlcNAc) threonine).

Belongs to the small heat shock protein (HSP20) family. In terms of assembly, heteromer composed of three CRYAA and one CRYAB subunits. Aggregates with homologous proteins, including the small heat shock protein HSPB1, to form large heteromeric complexes. Inter-subunit bridging via zinc ions enhances stability, which is crucial as there is no protein turn over in the lens. Interacts with HSPBAP1 and TTN/titin. Interacts with TMEM109; in the cellular response to DNA damage. Interacts with DES; binds rapidly during early stages of DES filament assembly and a reduced binding seen in the later stages. Interacts with TMED10; the interaction mediates the translocation from the cytoplasm into the ERGIC (endoplasmic reticulum-Golgi intermediate compartment) and thereby secretion. Interacts with ATP6V1A and with MTOR, forming a ternary complex.

It is found in the cytoplasm. The protein localises to the nucleus. Its subcellular location is the secreted. It localises to the lysosome. In terms of biological role, may contribute to the transparency and refractive index of the lens. Has chaperone-like activity, preventing aggregation of various proteins under a wide range of stress conditions. In lens epithelial cells, stabilizes the ATP6V1A protein, preventing its degradation by the proteasome. The sequence is that of Alpha-crystallin B chain (CRYAB) from Macaca fascicularis (Crab-eating macaque).